The following is a 295-amino-acid chain: Sulfotransferase 1 family member D1 (295 aa).

Lysine 48–tryptophan 53 contributes to the 3'-phosphoadenylyl sulfate binding site. Substrate-binding positions include phenylalanine 81 and lysine 106 to histidine 108. Residue histidine 108 is the Proton acceptor of the active site. Residues arginine 130 and serine 138 each coordinate 3'-phosphoadenylyl sulfate. Phenylalanine 142 provides a ligand contact to substrate. Residues tyrosine 193, serine 227 to methionine 232, and arginine 257 to glycine 259 contribute to the 3'-phosphoadenylyl sulfate site.

This sequence belongs to the sulfotransferase 1 family. In terms of tissue distribution, detected in kidney and liver. Detected in kidney collecting duct cells.

It localises to the cytoplasm. Sulfotransferase with broad substrate specificity that utilizes 3'-phospho-5'-adenylyl sulfate (PAPS) as sulfonate donor to catalyze the sulfate conjugation of catecholamines, such as dopamine, prostaglandins, leukotriene E4, drugs and xenobiotic compounds. Has sulfotransferase activity towards p-nitrophenol, 2-naphthylamine and minoxidil (in vitro). Sulfonation increases the water solubility of most compounds, and therefore their renal excretion, but it can also result in bioactivation to form active metabolites. This Mus musculus (Mouse) protein is Sulfotransferase 1 family member D1 (Sult1d1).